The chain runs to 63 residues: Large ribosomal subunit protein uL29 (63 aa).

The protein belongs to the universal ribosomal protein uL29 family.

The sequence is that of Large ribosomal subunit protein uL29 from Glaesserella parasuis serovar 5 (strain SH0165) (Haemophilus parasuis).